Here is a 342-residue protein sequence, read N- to C-terminus: Phosphoribosylformylglycinamidine cyclo-ligase (342 aa).

This sequence belongs to the AIR synthase family.

It is found in the cytoplasm. The enzyme catalyses 2-formamido-N(1)-(5-O-phospho-beta-D-ribosyl)acetamidine + ATP = 5-amino-1-(5-phospho-beta-D-ribosyl)imidazole + ADP + phosphate + H(+). Its pathway is purine metabolism; IMP biosynthesis via de novo pathway; 5-amino-1-(5-phospho-D-ribosyl)imidazole from N(2)-formyl-N(1)-(5-phospho-D-ribosyl)glycinamide: step 2/2. This Latilactobacillus sakei subsp. sakei (strain 23K) (Lactobacillus sakei subsp. sakei) protein is Phosphoribosylformylglycinamidine cyclo-ligase.